We begin with the raw amino-acid sequence, 830 residues long: MAPNAATKKRAAARDDDFVLTLSDDENDIFENGVEEDGDNAQEDTLSSSKKRKREAAEAPKGKNKKQKQLKKSKKGESAAGAVSDDQSSEEDEAEAMDAGEDDGALDSEFEFDVGGNANTGVIEGFDGWEARNGASLADAPKNGDKKAVDIDDIISRRKAKKEAELKKKQQKEKKRREEEGEEESEGEDADSDGGMSVDFQDDELLAADGFGMGADGADESDDDVENGSNDSDDSEGKGSEDEESGDEYNDDDAASDNDSVATPVHHPDDEAASDEESEAESEVDAEEAEKRKAFFAPEEKSTAVSTFNRSFQDFNLSRPILRGLASVNFTTPTPIQQKTIPVALLGKDIVGSAVTGSGKTAAFVVPILERLLFRPRKVPTSRVAILMPTRELAVQCYNVATKLATHTDITFCQLVGGFSLREQENILKKRPDVIIATPGRFIDHMRNSPSFTVDTLEILVLDEADRMLEDGFADELNEILTTIPKSRQTMLFSATMTDSVDKLIRVGLNRPVRLMVDSKKNTSMNLTQEFVRLRPGREDKRLGYLLYLCNEIYTGRVIVFFRQKREAHRVRIVFGLLGLKAAELHGSMSQEQRIKSVENFREGKVAFLLATDLASRGLDIKGVETVINYEAPQSHEIYLHRVGRTARAGRSGRACTIAAEPDRKIVKSAVKAGKAQGAKIVSRVVDPAVADEWAAKAKGLEDEIEEVLQEEKLEKQMAQAEMQVTKGENLIKHEAEIMSRPKRTWFETERDKRAARKLGATELNGPSKKDKVKLSNKDKKRLDDARQRHEGNIGWKKGKADREAPKQGKNKGGKTKSDKKNKIKMKGKK.

2 disordered regions span residues Met1–Asn117 and Lys159–Phe295. The span at Ser23–Gln42 shows a compositional bias: acidic residues. The span at Gly62 to Lys74 shows a compositional bias: basic residues. Acidic residues predominate over residues Gln87–Phe112. Positions Lys159–Lys168 are enriched in basic and acidic residues. Acidic residues-rich tracts occupy residues Glu180–Ser192, Gly217–Asp234, Glu241–Ser256, and Glu271–Glu288. The short motif at Arg310–Gln338 is the Q motif element. One can recognise a Helicase ATP-binding domain in the interval Ile341–Leu515. Ala354 to Thr361 lines the ATP pocket. Positions Asp463–Asp466 match the DEAD box motif. Positions Arg542–Ala689 constitute a Helicase C-terminal domain. Positions Ala689–Glu735 form a coiled coil. Positions Arg757 to Lys830 are disordered. Positions Ser768–Gly792 are enriched in basic and acidic residues.

The protein belongs to the DEAD box helicase family. DDX27/DRS1 subfamily. In terms of assembly, associates with pre-ribosomal particles.

The protein localises to the nucleus. It localises to the nucleolus. It catalyses the reaction ATP + H2O = ADP + phosphate + H(+). Functionally, ATP-binding RNA helicase involved in ribosome assembly. This Aspergillus fumigatus (strain ATCC MYA-4609 / CBS 101355 / FGSC A1100 / Af293) (Neosartorya fumigata) protein is ATP-dependent RNA helicase drs1 (drs1).